A 331-amino-acid polypeptide reads, in one-letter code: Nacrein-like protein P1 (331 aa).

Positions 1 to 331 (QSPINIVSYD…LHALRNVEGY (331 aa)) constitute an Alpha-carbonic anhydrase domain. 3 residues coordinate Zn(2+): H69, H71, and H94. The disordered stretch occupies residues 138-240 (DEPDDEECKR…GENGHKHGCR (103 aa)). The segment covering 144 to 156 (ECKRILKGHHPDN) has biased composition (basic and acidic residues). Low complexity predominate over residues 157-232 (NENGNGDNGN…NNGENGNNGE (76 aa)). Repeat copies occupy residues 162-164 (GDN), 165-167 (GNN), 168-170 (GYN), 171-173 (GDN), 174-176 (GNN), 177-179 (GDN), 180-182 (GNN), 183-185 (GYN), 186-188 (GDN), 189-191 (GNN), 192-194 (GDN), 195-197 (GNN), 198-200 (GYN), 201-203 (GDN), 204-206 (GNN), 207-209 (GDN), 210-212 (GNN), 213-215 (GEN), 216-218 (GNN), 219-221 (GEN), 222-224 (GNN), 225-227 (GEN), 228-229 (GN), and 231-233 (GEN). Residues 162 to 233 (GDNGNNGYNG…NGENGNNGEN (72 aa)) form a 24 X 3 AA approximate tandem repeats of G-X-N region. 298–299 (TT) is a binding site for substrate.

This sequence belongs to the alpha-carbonic anhydrase family. In terms of assembly, homooligomer; disulfide-linked. May also be disulfide-linked to insoluble organic matrix. The cofactor is Zn(2+). In terms of tissue distribution, expressed in the mantle.

Its subcellular location is the secreted. It localises to the extracellular space. It is found in the extracellular matrix. The catalysed reaction is hydrogencarbonate + H(+) = CO2 + H2O. In terms of biological role, acts as a negative regulator for calcification in the shells of mollusks. May function both as a calcium concentrator and as a carbonic anhydrase required for production of carbonate ions, which are assembled to CaCO(3) at mineralization sites. Is important for shell formation in both the calcitic prismatic layer and the aragonitic nacreous layer. Shows inhibitory activity of crystal formation when present in free state but, when attached to the insoluble matrix, may regulate the form and size of aragonite crystal. This is Nacrein-like protein P1 from Mizuhopecten yessoensis (Japanese scallop).